Reading from the N-terminus, the 264-residue chain is Glutamate racemase (264 aa).

Residues 11 to 12 and 43 to 44 each bind substrate; these read DS and YG. Catalysis depends on Cys74, which acts as the Proton donor/acceptor. Position 75 to 76 (75 to 76) interacts with substrate; sequence NT. Cys193 (proton donor/acceptor) is an active-site residue. 194 to 195 provides a ligand contact to substrate; sequence TH.

The protein belongs to the aspartate/glutamate racemases family.

It catalyses the reaction L-glutamate = D-glutamate. It participates in cell wall biogenesis; peptidoglycan biosynthesis. Provides the (R)-glutamate required for cell wall biosynthesis. This Bifidobacterium longum (strain DJO10A) protein is Glutamate racemase.